The primary structure comprises 286 residues: MKQFIVLTVVLLAIQELQGGSVVTVDDKCTCKDTLNTLTKGQLIDRLVLCNQRNDNLEKIIDGLKKENNILRKENDGLRAENCQLSEALKREKEARQKAEKALKECQKNTENLKETIEQLKKELAEAQKALEKCKKELADCKKENAKLLNKIEELNCTITQLQEKLERCRGRERDLQCQLDECKKKLNICNNELIACRKQQEELRCKIERLNTEIEKLRKQNAACEKDLNTLRCETSEFLAIATQRQSQLTSIIQRAEGESSAIKASYIGFRNSHDLTCAPCAGPA.

The first 19 residues, 1–19 (MKQFIVLTVVLLAIQELQG), serve as a signal peptide directing secretion. The tract at residues 61-235 (IDGLKKENNI…EKDLNTLRCE (175 aa)) is helical. Asn156 carries N-linked (GlcNAc...) asparagine glycosylation.

The sequence is that of Puff II/9-2 protein (II/9-2) from Bradysia coprophila (Dark-winged fungus gnat).